A 334-amino-acid chain; its full sequence is HTH-type transcriptional repressor PurR (334 aa).

Residues 2–56 (ATIKDVAKMAGVSTTTVSHVINKTRFVAAETEKLVLQAIQELNYSPSAVARSLKV) enclose the HTH lacI-type domain. Positions 4-23 (IKDVAKMAGVSTTTVSHVIN) form a DNA-binding region, H-T-H motif. The DNA-binding element occupies 48–56 (SAVARSLKV). Positions 73, 189, 191, 220, and 274 each coordinate hypoxanthine.

Homodimer.

It participates in purine metabolism; purine nucleotide biosynthesis [regulation]. Its function is as follows. Is the main repressor of the genes involved in the de novo synthesis of purine nucleotides, regulating purB, purC, purEK, purF, purHD, purL, purMN and guaBA expression. PurR is allosterically activated to bind its cognate DNA by binding the purine corepressors, hypoxanthine or guanine, thereby effecting transcription repression. This chain is HTH-type transcriptional repressor PurR, found in Pasteurella multocida (strain Pm70).